A 295-amino-acid chain; its full sequence is UDP-N-acetylenolpyruvoylglucosamine reductase (295 aa).

One can recognise an FAD-binding PCMH-type domain in the interval 23–188; sequence QVGGPADFLA…ISAKFALKPG (166 aa). The active site involves arginine 167. Serine 217 acts as the Proton donor in catalysis. Glutamate 287 is a catalytic residue.

It belongs to the MurB family. The cofactor is FAD.

It localises to the cytoplasm. The catalysed reaction is UDP-N-acetyl-alpha-D-muramate + NADP(+) = UDP-N-acetyl-3-O-(1-carboxyvinyl)-alpha-D-glucosamine + NADPH + H(+). It participates in cell wall biogenesis; peptidoglycan biosynthesis. Cell wall formation. This chain is UDP-N-acetylenolpyruvoylglucosamine reductase, found in Streptococcus equi subsp. zooepidemicus (strain H70).